The chain runs to 110 residues: Large ribosomal subunit protein uL22 (110 aa).

Belongs to the universal ribosomal protein uL22 family. As to quaternary structure, part of the 50S ribosomal subunit.

Its function is as follows. This protein binds specifically to 23S rRNA; its binding is stimulated by other ribosomal proteins, e.g. L4, L17, and L20. It is important during the early stages of 50S assembly. It makes multiple contacts with different domains of the 23S rRNA in the assembled 50S subunit and ribosome. In terms of biological role, the globular domain of the protein is located near the polypeptide exit tunnel on the outside of the subunit, while an extended beta-hairpin is found that lines the wall of the exit tunnel in the center of the 70S ribosome. The protein is Large ribosomal subunit protein uL22 of Pseudomonas aeruginosa (strain LESB58).